A 162-amino-acid chain; its full sequence is NAD(P)H-quinone oxidoreductase subunit N (162 aa).

Belongs to the complex I NdhN subunit family. In terms of assembly, NDH-1 can be composed of about 15 different subunits; different subcomplexes with different compositions have been identified which probably have different functions.

Its subcellular location is the cellular thylakoid membrane. The enzyme catalyses a plastoquinone + NADH + (n+1) H(+)(in) = a plastoquinol + NAD(+) + n H(+)(out). It catalyses the reaction a plastoquinone + NADPH + (n+1) H(+)(in) = a plastoquinol + NADP(+) + n H(+)(out). In terms of biological role, NDH-1 shuttles electrons from an unknown electron donor, via FMN and iron-sulfur (Fe-S) centers, to quinones in the respiratory and/or the photosynthetic chain. The immediate electron acceptor for the enzyme in this species is believed to be plastoquinone. Couples the redox reaction to proton translocation, and thus conserves the redox energy in a proton gradient. Cyanobacterial NDH-1 also plays a role in inorganic carbon-concentration. The sequence is that of NAD(P)H-quinone oxidoreductase subunit N from Trichormus variabilis (strain ATCC 29413 / PCC 7937) (Anabaena variabilis).